A 331-amino-acid polypeptide reads, in one-letter code: UPF0194 membrane protein CKO_02332 (331 aa).

A signal peptide spans 1 to 15 (MKKPVVIALAVAALA). Residues 142-207 (ISANDLENAR…ELDLQDTTLI (66 aa)) are a coiled coil.

It belongs to the UPF0194 family.

Its subcellular location is the periplasm. This Citrobacter koseri (strain ATCC BAA-895 / CDC 4225-83 / SGSC4696) protein is UPF0194 membrane protein CKO_02332.